The chain runs to 453 residues: Bifunctional protein GlmU (453 aa).

The pyrophosphorylase stretch occupies residues M1–K225. UDP-N-acetyl-alpha-D-glucosamine-binding positions include L6–G9, K20, Q71, G76–T77, Y98–D100, G135, E150, N165, and N223. D100 lines the Mg(2+) pocket. Mg(2+) is bound at residue N223. The interval A226–D246 is linker. Residues G247 to S453 form an N-acetyltransferase region. The UDP-N-acetyl-alpha-D-glucosamine site is built by R329 and K347. The Proton acceptor role is filled by H359. Residues Y362 and N373 each coordinate UDP-N-acetyl-alpha-D-glucosamine. Acetyl-CoA-binding positions include A376, N382–Y383, S401, and A419.

In the N-terminal section; belongs to the N-acetylglucosamine-1-phosphate uridyltransferase family. This sequence in the C-terminal section; belongs to the transferase hexapeptide repeat family. In terms of assembly, homotrimer. Mg(2+) serves as cofactor.

The protein resides in the cytoplasm. It carries out the reaction alpha-D-glucosamine 1-phosphate + acetyl-CoA = N-acetyl-alpha-D-glucosamine 1-phosphate + CoA + H(+). The enzyme catalyses N-acetyl-alpha-D-glucosamine 1-phosphate + UTP + H(+) = UDP-N-acetyl-alpha-D-glucosamine + diphosphate. It participates in nucleotide-sugar biosynthesis; UDP-N-acetyl-alpha-D-glucosamine biosynthesis; N-acetyl-alpha-D-glucosamine 1-phosphate from alpha-D-glucosamine 6-phosphate (route II): step 2/2. Its pathway is nucleotide-sugar biosynthesis; UDP-N-acetyl-alpha-D-glucosamine biosynthesis; UDP-N-acetyl-alpha-D-glucosamine from N-acetyl-alpha-D-glucosamine 1-phosphate: step 1/1. It functions in the pathway bacterial outer membrane biogenesis; LPS lipid A biosynthesis. Its function is as follows. Catalyzes the last two sequential reactions in the de novo biosynthetic pathway for UDP-N-acetylglucosamine (UDP-GlcNAc). The C-terminal domain catalyzes the transfer of acetyl group from acetyl coenzyme A to glucosamine-1-phosphate (GlcN-1-P) to produce N-acetylglucosamine-1-phosphate (GlcNAc-1-P), which is converted into UDP-GlcNAc by the transfer of uridine 5-monophosphate (from uridine 5-triphosphate), a reaction catalyzed by the N-terminal domain. The chain is Bifunctional protein GlmU from Burkholderia thailandensis (strain ATCC 700388 / DSM 13276 / CCUG 48851 / CIP 106301 / E264).